Here is a 464-residue protein sequence, read N- to C-terminus: Glutamate--tRNA ligase (464 aa).

The 'HIGH' region motif lies at 9-19; that stretch reads PSPTGYLHIGG. The short motif at 242–246 is the 'KMSKS' region element; it reads KISKR. Residue K245 coordinates ATP.

The protein belongs to the class-I aminoacyl-tRNA synthetase family. Glutamate--tRNA ligase type 1 subfamily. Monomer.

Its subcellular location is the cytoplasm. It carries out the reaction tRNA(Glu) + L-glutamate + ATP = L-glutamyl-tRNA(Glu) + AMP + diphosphate. In terms of biological role, catalyzes the attachment of glutamate to tRNA(Glu) in a two-step reaction: glutamate is first activated by ATP to form Glu-AMP and then transferred to the acceptor end of tRNA(Glu). In Neisseria gonorrhoeae (strain ATCC 700825 / FA 1090), this protein is Glutamate--tRNA ligase.